Consider the following 239-residue polypeptide: Cytochrome b6-f complex iron-sulfur subunit 1, cyanelle (239 aa).

Residues 1 to 60 (MAFTTTAVVAPRGAKITGQSSTCAIQNGKTVAVGTSKQVGSFKPVFAAAKPAKETTFSVS) constitute a cyanelle transit peptide. A helical membrane pass occupies residues 81 to 101 (LLGAIAGPVAGAGGPFVSFLV). The Rieske domain occupies 125 to 221 (VSSWLETHKP…VSVLEDGVVA (97 aa)). [2Fe-2S] cluster is bound by residues Cys167, His169, Cys185, and His188. A disulfide bond links Cys172 and Cys187.

Belongs to the Rieske iron-sulfur protein family. The 4 large subunits of the cytochrome b6-f complex are cytochrome b6, subunit IV (17 kDa polypeptide, petD), cytochrome f and the Rieske protein, while the 4 small subunits are petG, petL, petM and petN. The complex functions as a dimer. The cofactor is [2Fe-2S] cluster.

The protein resides in the plastid. The protein localises to the cyanelle thylakoid membrane. The catalysed reaction is 2 oxidized [plastocyanin] + a plastoquinol + 2 H(+)(in) = 2 reduced [plastocyanin] + a plastoquinone + 4 H(+)(out). Component of the cytochrome b6-f complex, which mediates electron transfer between photosystem II (PSII) and photosystem I (PSI), cyclic electron flow around PSI, and state transitions. The polypeptide is Cytochrome b6-f complex iron-sulfur subunit 1, cyanelle (petC-1) (Cyanophora paradoxa).